The sequence spans 76 residues: uncharacterized protein (76 aa).

Residues Met1–Pro24 form a disordered region. The span at Gly8–Ser22 shows a compositional bias: basic and acidic residues.

This is an uncharacterized protein from Dryophytes versicolor (chameleon treefrog).